Here is a 276-residue protein sequence, read N- to C-terminus: Formamidopyrimidine-DNA glycosylase (276 aa).

Pro-2 serves as the catalytic Schiff-base intermediate with DNA. Glu-3 serves as the catalytic Proton donor. The active-site Proton donor; for beta-elimination activity is the Lys-58. DNA-binding residues include His-94, Arg-112, and Arg-157. The segment at 242 to 276 (FVYDRAGLPCRVCGTPIKQIVQGQRSTYFCPTCQR) adopts an FPG-type zinc-finger fold. The Proton donor; for delta-elimination activity role is filled by Arg-266.

Belongs to the FPG family. As to quaternary structure, monomer. Requires Zn(2+) as cofactor.

It catalyses the reaction Hydrolysis of DNA containing ring-opened 7-methylguanine residues, releasing 2,6-diamino-4-hydroxy-5-(N-methyl)formamidopyrimidine.. The catalysed reaction is 2'-deoxyribonucleotide-(2'-deoxyribose 5'-phosphate)-2'-deoxyribonucleotide-DNA = a 3'-end 2'-deoxyribonucleotide-(2,3-dehydro-2,3-deoxyribose 5'-phosphate)-DNA + a 5'-end 5'-phospho-2'-deoxyribonucleoside-DNA + H(+). Its function is as follows. Involved in base excision repair of DNA damaged by oxidation or by mutagenic agents. Acts as a DNA glycosylase that recognizes and removes damaged bases. Has a preference for oxidized purines, such as 7,8-dihydro-8-oxoguanine (8-oxoG). Has AP (apurinic/apyrimidinic) lyase activity and introduces nicks in the DNA strand. Cleaves the DNA backbone by beta-delta elimination to generate a single-strand break at the site of the removed base with both 3'- and 5'-phosphates. This is Formamidopyrimidine-DNA glycosylase from Paraburkholderia xenovorans (strain LB400).